Consider the following 219-residue polypeptide: 7-cyano-7-deazaguanine synthase (219 aa).

11–21 (FSGGQDSTTCL) contributes to the ATP binding site. The Zn(2+) site is built by Cys-188, Cys-196, Cys-199, and Cys-202.

Belongs to the QueC family. Zn(2+) serves as cofactor.

The catalysed reaction is 7-carboxy-7-deazaguanine + NH4(+) + ATP = 7-cyano-7-deazaguanine + ADP + phosphate + H2O + H(+). It functions in the pathway purine metabolism; 7-cyano-7-deazaguanine biosynthesis. Its function is as follows. Catalyzes the ATP-dependent conversion of 7-carboxy-7-deazaguanine (CDG) to 7-cyano-7-deazaguanine (preQ(0)). The sequence is that of 7-cyano-7-deazaguanine synthase from Glaesserella parasuis serovar 5 (strain SH0165) (Haemophilus parasuis).